The chain runs to 321 residues: Ferredoxin--NADP reductase (321 aa).

Residues Glu-33, Gln-41, Tyr-46, Val-86, Leu-119, Asp-277, and Ser-318 each contribute to the FAD site.

This sequence belongs to the ferredoxin--NADP reductase type 2 family. As to quaternary structure, homodimer. FAD serves as cofactor.

It carries out the reaction 2 reduced [2Fe-2S]-[ferredoxin] + NADP(+) + H(+) = 2 oxidized [2Fe-2S]-[ferredoxin] + NADPH. The protein is Ferredoxin--NADP reductase of Lactococcus lactis subsp. cremoris (strain MG1363).